A 565-amino-acid chain; its full sequence is NAD-dependent malic enzyme (565 aa).

Y104 acts as the Proton donor in catalysis. Residue R157 participates in NAD(+) binding. The Proton acceptor role is filled by K175. E246, D247, and D270 together coordinate a divalent metal cation. Positions 270 and 418 each coordinate NAD(+).

This sequence belongs to the malic enzymes family. Homotetramer. Mg(2+) serves as cofactor. It depends on Mn(2+) as a cofactor.

The catalysed reaction is (S)-malate + NAD(+) = pyruvate + CO2 + NADH. It carries out the reaction oxaloacetate + H(+) = pyruvate + CO2. This Salmonella newport (strain SL254) protein is NAD-dependent malic enzyme.